The primary structure comprises 348 residues: Selenide, water dikinase (348 aa).

Cysteine 17 is a catalytic residue. ATP-binding positions include lysine 20 and 48 to 50 (TSD). Aspartate 51 provides a ligand contact to Mg(2+). Residues aspartate 68, aspartate 91, and 139–141 (GHT) contribute to the ATP site. A Mg(2+)-binding site is contributed by aspartate 91. Aspartate 227 contacts Mg(2+).

This sequence belongs to the selenophosphate synthase 1 family. Class I subfamily. In terms of assembly, homodimer. The cofactor is Mg(2+).

The enzyme catalyses hydrogenselenide + ATP + H2O = selenophosphate + AMP + phosphate + 2 H(+). Synthesizes selenophosphate from selenide and ATP. This Dechloromonas aromatica (strain RCB) protein is Selenide, water dikinase.